The primary structure comprises 186 residues: TATA-box-binding protein D (186 aa).

2 tandem repeats follow at residues 10–86 (IENV…VEDL) and 101–179 (VQNI…HERL).

This sequence belongs to the TBP family.

In terms of biological role, general factor that plays a role in the activation of archaeal genes transcribed by RNA polymerase. Binds specifically to the TATA box promoter element which lies close to the position of transcription initiation. This is TATA-box-binding protein D (tbpD) from Halobacterium salinarum (strain ATCC 700922 / JCM 11081 / NRC-1) (Halobacterium halobium).